Reading from the N-terminus, the 343-residue chain is GTPase Obg (343 aa).

Residues 1-159 form the Obg domain; sequence MKFLDQAKVY…LNIWLRLKLI (159 aa). Residues 160-327 form the OBG-type G domain; the sequence is ADAGLVGLPN…VLRALMTVIA (168 aa). GTP contacts are provided by residues 166–173, 191–195, 212–215, 279–282, and 308–310; these read GLPNAGKS, FTTLH, DIPG, SQVD, and SAV. Mg(2+) contacts are provided by Ser173 and Thr193.

This sequence belongs to the TRAFAC class OBG-HflX-like GTPase superfamily. OBG GTPase family. In terms of assembly, monomer. It depends on Mg(2+) as a cofactor.

The protein resides in the cytoplasm. Functionally, an essential GTPase which binds GTP, GDP and possibly (p)ppGpp with moderate affinity, with high nucleotide exchange rates and a fairly low GTP hydrolysis rate. Plays a role in control of the cell cycle, stress response, ribosome biogenesis and in those bacteria that undergo differentiation, in morphogenesis control. The sequence is that of GTPase Obg from Mesorhizobium japonicum (strain LMG 29417 / CECT 9101 / MAFF 303099) (Mesorhizobium loti (strain MAFF 303099)).